The following is a 398-amino-acid chain: HTFVDLKSPFTLSNYLSFSSSKRRQPPSLFTVRASDSDFEAAVVAGKVPEAPPVPPTPASPAGTPVVPSLPIQRRPRRNRRSPALRSAFQETTLSPANFVYPLFIHEGEEDTPIGAMPGCYRLGWRHGLLEEVAKARDVGVNSVVLFPKIPDALKTPTGDEAYNEDGLVPRSIRLLKDKYPDLIIYTDVALDPYSSDGHDGIVREDGVIMNDETVHQLCKQAVAQARAGADVVSPSDMMDGRVGAMRVALDAEGFQHVSIMSYTAKYASSFYGPFREALDSNPRFGDKKTYQMNPANYREALTEMREDESEGADILLVKPGLPYLDIIRLLRDNSPLPIAAYQVSGEYSMIKAGGALKMIDEEKVMMESLLCLRRAGADIILTYFALQAARTLCGEKR.

Residues 48-87 (VPEAPPVPPTPASPAGTPVVPSLPIQRRPRRNRRSPALRS) form a disordered region. Over residues 50–59 (EAPPVPPTPA) the composition is skewed to pro residues. Residues 60-69 (SPAGTPVVPS) are compositionally biased toward low complexity. A compositionally biased stretch (basic residues) spans 74-83 (RRPRRNRRSP). Lys-266 acts as the Schiff-base intermediate with substrate in catalysis. 5-aminolevulinate contacts are provided by Arg-276 and Lys-288. Glu-304 contributes to the Mg(2+) binding site. Lys-319 acts as the Schiff-base intermediate with substrate in catalysis. Residues Ser-345 and Tyr-384 each coordinate 5-aminolevulinate.

Belongs to the ALAD family. Homooctamer; formed by oligomerization of dimers. Probably also forms lower oligomers. Mg(2+) is required as a cofactor.

The protein resides in the plastid. The protein localises to the chloroplast. It carries out the reaction 2 5-aminolevulinate = porphobilinogen + 2 H2O + H(+). It participates in porphyrin-containing compound metabolism; protoporphyrin-IX biosynthesis; coproporphyrinogen-III from 5-aminolevulinate: step 1/4. Its activity is regulated as follows. Activated by magnesium. Inhibited by succinyl acetone. Enzyme activity may depend on the oligomerization state, where the fully active octamer may dissociate and reassemble into less active lower oligomers. In terms of biological role, catalyzes an early step in the biosynthesis of tetrapyrroles. Binds two molecules of 5-aminolevulinate per subunit, each at a distinct site, and catalyzes their condensation to form porphobilinogen. This Pisum sativum (Garden pea) protein is Delta-aminolevulinic acid dehydratase, chloroplastic (HEMB).